A 131-amino-acid polypeptide reads, in one-letter code: Peptide methionine sulfoxide reductase MsrB (131 aa).

In terms of domain architecture, MsrB spans 8 to 130 (LDTWREELTD…NSLSLKLVPR (123 aa)). Zn(2+) contacts are provided by C47, C50, C96, and C99. The Nucleophile role is filled by C119.

It belongs to the MsrB Met sulfoxide reductase family. It depends on Zn(2+) as a cofactor.

The enzyme catalyses L-methionyl-[protein] + [thioredoxin]-disulfide + H2O = L-methionyl-(R)-S-oxide-[protein] + [thioredoxin]-dithiol. The polypeptide is Peptide methionine sulfoxide reductase MsrB (Ectopseudomonas mendocina (strain ymp) (Pseudomonas mendocina)).